The following is an 81-amino-acid chain: MNVDHEVNLLVEEIHRLGSKNADGKLSVKFGVLFRDDKCANLFEALVGTLKAAKRRKIVTYPGELLLQGVHDDVDIILLQD.

Met1 carries the N-acetylmethionine modification.

The protein belongs to the costars family.

In Homo sapiens (Human), this protein is Costars family protein ABRACL (ABRACL).